We begin with the raw amino-acid sequence, 152 residues long: Small ribosomal subunit protein uS13 (152 aa).

The disordered stretch occupies residues 133–152 (GQHTKTTGRRGRTVGVSKKK).

Belongs to the universal ribosomal protein uS13 family.

The protein localises to the cytoplasm. Its function is as follows. Located at the top of the head of the 40S subunit, it contacts several helices of the 18S rRNA. The sequence is that of Small ribosomal subunit protein uS13 (RpS18) from Spodoptera frugiperda (Fall armyworm).